Here is a 342-residue protein sequence, read N- to C-terminus: Polygalacturonase inhibitor 2 (342 aa).

The first 29 residues, 1-29 (MTQFNIPVTMSSSLSIILVILVSLSTAHS), serve as a signal peptide directing secretion. 2 disulfide bridges follow: C32/C62 and C63/C72. N64 is a glycosylation site (N-linked (GlcNAc...) (complex) asparagine). LRR repeat units lie at residues 82-107 (NNLDLSGLNLPKPYPIPSSLANLPYL), 108-132 (NFLYIGGINNLVGPIPPAIAKLTQL), 133-156 (HYLYITHTNVSGAIPDFLSQIKTL), 157-180 (VTLDFSYNALSGTLPPSISSLPNL), 181-205 (VGITFDGNRISGAIPDSYGSFSKLF), 206-228 (TSMTISRNRLTGKIPPTFANLNL), 229-252 (AFVDLSRNMLEGDASVLFGSDKNT), 253-275 (QKIHLAKNSLAFDLGKVGLSKNL), 276-299 (NGLDLRNNRIYGTLPQGLTQLKFL), and 300-319 (HSLNVSFNNLCGEIPQGGNL). N-linked (GlcNAc...) (complex) asparagine glycosylation occurs at N141. A glycan (N-linked (GlcNAc...) asparagine) is linked at N303. Intrachain disulfides connect C310-C332 and C334-C341.

It belongs to the polygalacturonase-inhibiting protein family. Post-translationally, asn-303 is not glycosylated.

The protein localises to the secreted. It localises to the cell wall. Its subcellular location is the membrane. Its function is as follows. Inhibitor of fungal polygalacturonase. It is an important factor for plant resistance to phytopathogenic fungi. Inhibits all polygalacturonases (PG) tested, with the exception of PG from F.oxysporum which was only inhibited at 60%. The sequence is that of Polygalacturonase inhibitor 2 (PGIP2) from Phaseolus vulgaris (Kidney bean).